The following is a 442-amino-acid chain: Putative mannan endo-1,6-alpha-mannosidase C1198.07c (442 aa).

The signal sequence occupies residues M1 to A19. At F20 to W421 the chain is on the lumenal side. N-linked (GlcNAc...) asparagine glycosylation is found at N75, N124, N193, N229, N254, N257, and N356. The helical transmembrane segment at A422–F442 threads the bilayer.

This sequence belongs to the glycosyl hydrolase 76 family.

It localises to the endoplasmic reticulum membrane. It catalyses the reaction Random hydrolysis of (1-&gt;6)-alpha-D-mannosidic linkages in unbranched (1-&gt;6)-mannans.. The protein is Putative mannan endo-1,6-alpha-mannosidase C1198.07c of Schizosaccharomyces pombe (strain 972 / ATCC 24843) (Fission yeast).